The following is a 144-amino-acid chain: Endoribonuclease YbeY (144 aa).

Residues His105, His109, and Asp115 each contribute to the Zn(2+) site.

Belongs to the endoribonuclease YbeY family. Requires Zn(2+) as cofactor.

Its subcellular location is the cytoplasm. Functionally, single strand-specific metallo-endoribonuclease involved in late-stage 70S ribosome quality control and in maturation of the 3' terminus of the 16S rRNA. This is Endoribonuclease YbeY from Chlorobium limicola (strain DSM 245 / NBRC 103803 / 6330).